A 225-amino-acid chain; its full sequence is Cytidylate kinase (225 aa).

ATP is bound at residue 11–19 (GPSGAGKGT).

Belongs to the cytidylate kinase family. Type 1 subfamily.

It localises to the cytoplasm. The enzyme catalyses CMP + ATP = CDP + ADP. It catalyses the reaction dCMP + ATP = dCDP + ADP. This Mannheimia succiniciproducens (strain KCTC 0769BP / MBEL55E) protein is Cytidylate kinase.